Reading from the N-terminus, the 839-residue chain is Translation initiation factor IF-2 (839 aa).

2 stretches are compositionally biased toward basic and acidic residues: residues 1 to 12 (MSDNEIKNETPK) and 57 to 67 (AEAKAQEKQAA). 2 disordered regions span residues 1–21 (MSDN…RRTK) and 57–244 (AEAK…GASL). Over residues 68–90 (EKAAQAQTEAKAQTEQACTTKKT) the composition is skewed to low complexity. 3 stretches are compositionally biased toward basic and acidic residues: residues 104–167 (PKTE…REET), 185–199 (READ…EGNR), and 212–233 (GGRE…DIKG). Residues 338 to 508 (TRAPVVTIMG…ILQSEVLELT (171 aa)) enclose the tr-type G domain. The interval 347–354 (GHVDHGKT) is G1. A GTP-binding site is contributed by 347–354 (GHVDHGKT). A G2 region spans residues 372 to 376 (GITQH). The segment at 394–397 (DTPG) is G3. GTP is bound by residues 394-398 (DTPGH) and 448-451 (NKID). The segment at 448 to 451 (NKID) is G4. Residues 484–486 (SAK) form a G5 region.

The protein belongs to the TRAFAC class translation factor GTPase superfamily. Classic translation factor GTPase family. IF-2 subfamily.

The protein resides in the cytoplasm. Its function is as follows. One of the essential components for the initiation of protein synthesis. Protects formylmethionyl-tRNA from spontaneous hydrolysis and promotes its binding to the 30S ribosomal subunits. Also involved in the hydrolysis of GTP during the formation of the 70S ribosomal complex. The chain is Translation initiation factor IF-2 from Haemophilus ducreyi (strain 35000HP / ATCC 700724).